Consider the following 1009-residue polypeptide: Protein-tyrosine kinase 2-beta (1009 aa).

The FERM domain occupies 39–359 (RILKVCFYSN…GYCRLQGEHK (321 aa)). A phosphoserine mark is found at Ser-361, Ser-375, and Ser-399. Tyr-402 bears the Phosphotyrosine; by autocatalysis mark. The 259-residue stretch at 425-683 (VVLNRILGEG…ELVCSLSDIY (259 aa)) folds into the Protein kinase domain. ATP-binding positions include 431 to 439 (LGEGFFGEV), Lys-457, and 503 to 509 (ELYPYGE). Asp-549 serves as the catalytic Proton acceptor. Tyr-579, Tyr-580, and Tyr-722 each carry phosphotyrosine. Positions 702–725 (PKILEPTAFQEPPPKPSRPKYKHP) are disordered. Ser-762 bears the Phosphoserine mark. Residue Thr-765 is modified to Phosphothreonine. An interaction with TGFB1I1 region spans residues 801–1009 (KIKMRQVLDR…VANLAHPPAE (209 aa)). At Tyr-834 the chain carries Phosphotyrosine. Position 839 is a phosphoserine (Ser-839). Thr-842 is subject to Phosphothreonine. Tyr-849 carries the phosphotyrosine modification. A Phosphoserine modification is found at Ser-866. Residues 868 to 1009 (QPTANLDRTD…VANLAHPPAE (142 aa)) form a focal adhesion targeting (FAT) region. Tyr-881 carries the post-translational modification Phosphotyrosine.

Belongs to the protein kinase superfamily. Tyr protein kinase family. FAK subfamily. Homodimer, or homooligomer. Interacts with NPHP1, ASAP1, ASAP2, ARHGAP26, SKAP2 and TGFB1I1. The Tyr-402 phosphorylated form interacts with SRC (via SH2 domain) and SRC family members. Forms a signaling complex with EPHA1, LCK and phosphatidylinositol 3-kinase; upon activation by EFNA1. Interacts with GRB2 (via SH2 domain). Interacts with P53/TP53 and MDM2. Interacts with MYLK. Interacts with BCAR1. Interacts with RB1CC1. Interacts with RHOU. Interacts with VAV1. Interacts with PDPK1. Interacts with LPXN and PTPN12. Interacts with SIRPA and SH2D3C. Interacts (hypophosphorylated) with PXN. Interacts with ARHGAP10. Interacts with KCNA2. Phosphorylated on tyrosine residues in response to various stimuli that elevate the intracellular calcium concentration; this activation is indirect and may be mediated by production of reactive oxygen species (ROS). Tyr-402 is the major autophosphorylation site, but other kinases can also phosphorylate Tyr-402. Autophosphorylation occurs in trans, i.e. one subunit of the dimeric receptor phosphorylates tyrosine residues on the other subunit. Phosphorylation at Tyr-402 promotes interaction with SRC and SRC family members, leading to phosphorylation at Tyr-579; Tyr-580 and Tyr-881. Phosphorylation at Tyr-881 is important for interaction with GRB2. Phosphorylated on tyrosine residues upon activation of FGR and PKC. Recruitment by NPHP1 to cell matrix adhesions initiates Tyr-402 phosphorylation. In monocytes, adherence to substrata is required for tyrosine phosphorylation and kinase activation. Angiotensin II, thapsigargin and L-alpha-lysophosphatidic acid (LPA) also induce autophosphorylation and increase kinase activity. Phosphorylation by MYLK promotes ITGB2 activation and is thus essential to trigger neutrophil transmigration during lung injury. Dephosphorylated by PTPN12. In terms of tissue distribution, highly expressed in pulmonary vein endothelial cells, lung and brain (at protein level). Isoform 1 is expressed at high levels in the brain (hippocampus, cerebral cortex and olfactory bulb) and poorly in the spleen and other tissues, whereas isoforms 2 and 3 are expressed in the spleen and brain (highest in cerebellum).

It is found in the cytoplasm. It localises to the perinuclear region. The protein resides in the cell membrane. The protein localises to the cell projection. Its subcellular location is the lamellipodium. It is found in the cell cortex. It localises to the nucleus. The protein resides in the cell junction. The protein localises to the focal adhesion. It carries out the reaction L-tyrosyl-[protein] + ATP = O-phospho-L-tyrosyl-[protein] + ADP + H(+). With respect to regulation, activated in response to stimuli that lead to increased intracellular Ca(2+) levels; this activation is indirect and may be mediated by calcium-mediated production of reactive oxygen species (ROS). Activated by autophosphorylation at Tyr-402; this creates a binding site for SRC family kinases and leads to phosphorylation at additional tyrosine residues. Phosphorylation at Tyr-402, Tyr-579 and Tyr-580 is required for optimal kinase activity. In terms of biological role, non-receptor protein-tyrosine kinase that regulates reorganization of the actin cytoskeleton, cell polarization, cell migration, adhesion, spreading and bone remodeling. Plays a role in the regulation of the humoral immune response, and is required for normal levels of marginal B-cells in the spleen and normal migration of splenic B-cells. Required for normal macrophage polarization and migration towards sites of inflammation. Regulates cytoskeleton rearrangement and cell spreading in T-cells, and contributes to the regulation of T-cell responses. Promotes osteoclastic bone resorption; this requires both PTK2B/PYK2 and SRC. May inhibit differentiation and activity of osteoprogenitor cells. Functions in signaling downstream of integrin and collagen receptors, immune receptors, G-protein coupled receptors (GPCR), cytokine, chemokine and growth factor receptors, and mediates responses to cellular stress. Forms multisubunit signaling complexes with SRC and SRC family members upon activation; this leads to the phosphorylation of additional tyrosine residues, creating binding sites for scaffold proteins, effectors and substrates. Regulates numerous signaling pathways. Promotes activation of phosphatidylinositol 3-kinase and of the AKT1 signaling cascade. Promotes activation of NOS3. Regulates production of the cellular messenger cGMP. Promotes activation of the MAP kinase signaling cascade, including activation of MAPK1/ERK2, MAPK3/ERK1 and MAPK8/JNK1. Promotes activation of Rho family GTPases, such as RHOA and RAC1. Recruits the ubiquitin ligase MDM2 to P53/TP53 in the nucleus, and thereby regulates P53/TP53 activity, P53/TP53 ubiquitination and proteasomal degradation. Acts as a scaffold, binding to both PDPK1 and SRC, thereby allowing SRC to phosphorylate PDPK1 at 'Tyr-9, 'Tyr-373', and 'Tyr-376'. Promotes phosphorylation of NMDA receptors by SRC family members, and thereby contributes to the regulation of NMDA receptor ion channel activity and intracellular Ca(2+) levels. May also regulate potassium ion transport by phosphorylation of potassium channel subunits. Phosphorylates SRC; this increases SRC kinase activity. Phosphorylates ASAP1, NPHP1, KCNA2 and SHC1. Promotes phosphorylation of ASAP2, RHOU and PXN; this requires both SRC and PTK2/PYK2. The protein is Protein-tyrosine kinase 2-beta (Ptk2b) of Rattus norvegicus (Rat).